A 438-amino-acid chain; its full sequence is Mannose-1-phosphate guanylyltransferase regulatory subunit alpha (438 aa).

The substrate-binding domain stretch occupies residues 2 to 260; it reads LKAVILIGGP…PNWWSQLKTA (259 aa). GDP-alpha-D-mannose-binding residues include Glu87 and Gln256. The tract at residues 282–438 is hexapeptide repeat domain; that stretch reads LANVGIKRGE…SRSFKNEIIL (157 aa). The interval 373–402 is C-loop; that stretch reads TPSDPDPNKPFAKMENPPLFNNEGKLNPSI.

It belongs to the transferase hexapeptide repeat family. As to quaternary structure, component of the GMPPA-GMPPB mannose-1-phosphate guanylyltransferase complex composed of 4 GMPPA subunits and 8 GMPPB subunits; the complex is organized into three layers, a central layer made up of 2 GMPPA dimers sandwiched between two layers each made up of 2 GMPPB dimers.

Its function is as follows. Regulatory subunit of the GMPPA-GMPPB mannose-1-phosphate guanylyltransferase complex; reduces the catalytic activity of GMPPB when part of the complex. Mediates allosteric feedback inhibition of GMPPB catalytic activity upon binding GDP-alpha-D-mannose. Together with GMPPB regulates GDP-alpha-D-mannose levels. This is Mannose-1-phosphate guanylyltransferase regulatory subunit alpha from Drosophila melanogaster (Fruit fly).